The primary structure comprises 227 residues: Protein M1425_1941 (227 aa).

The region spanning Glu-15–Ile-209 is the AMMECR1 domain.

The chain is Protein M1425_1941 from Saccharolobus islandicus (strain M.14.25 / Kamchatka #1) (Sulfolobus islandicus).